The chain runs to 373 residues: 2-phosphonomethylmalate synthase (373 aa).

Residues 5–256 enclose the Pyruvate carboxyltransferase domain; it reads LVLEDTTLRD…DLGIDLTKLK (252 aa).

This sequence belongs to the alpha-IPM synthase/homocitrate synthase family.

The enzyme catalyses 3-phosphonopyruvate + acetyl-CoA + H2O = (R)-2-(phosphonomethyl)malate + CoA + H(+). The protein operates within antibiotic biosynthesis. In terms of biological role, acyltransferase involved in the biosynthesis of the phosphonate antibiotic FR-900098, a potent antimalarial agent that acts as an inhibitor of 1-deoxy-D-xylulose 5-phosphate reductoisomerase (DXR), the first enzyme in the nonmevalonate pathway for isoprenoid biosynthesis. Catalyzes the condensation between acetyl-CoA and phosphonopyruvate to yield (R)-2-(phosphonomethyl)malate. The sequence is that of 2-phosphonomethylmalate synthase from Streptomyces rubellomurinus (strain ATCC 31215).